Reading from the N-terminus, the 310-residue chain is Oxygen-dependent coproporphyrinogen-III oxidase (310 aa).

Ser97 contributes to the substrate binding site. Residues His101 and His111 each contribute to the a divalent metal cation site. The active-site Proton donor is the His111. 113 to 115 provides a ligand contact to substrate; sequence NFR. A divalent metal cation contacts are provided by His150 and His180. The segment at 245-280 is important for dimerization; it reads YVEFNLLYDRGTRFGLEFGGRTESILMSLPPRVVWR. Position 263–265 (263–265) interacts with substrate; the sequence is GGR.

Belongs to the aerobic coproporphyrinogen-III oxidase family. As to quaternary structure, homodimer. The cofactor is a divalent metal cation.

Its subcellular location is the cytoplasm. The catalysed reaction is coproporphyrinogen III + O2 + 2 H(+) = protoporphyrinogen IX + 2 CO2 + 2 H2O. Its pathway is porphyrin-containing compound metabolism; protoporphyrin-IX biosynthesis; protoporphyrinogen-IX from coproporphyrinogen-III (O2 route): step 1/1. Its function is as follows. Involved in the heme biosynthesis. Catalyzes the aerobic oxidative decarboxylation of propionate groups of rings A and B of coproporphyrinogen-III to yield the vinyl groups in protoporphyrinogen-IX. In Coxiella burnetii (strain Dugway 5J108-111), this protein is Oxygen-dependent coproporphyrinogen-III oxidase.